Reading from the N-terminus, the 410-residue chain is Histone-lysine N-methyltransferase SUV39H2 (410 aa).

The 59-residue stretch at 47–105 (YEVEYLCDYKVVKDMEYYLVKWKGWPDSTNTWEPLQNLKCPLLLQQFSNDKHNYLSQVK) folds into the Chromo domain. The Pre-SET domain occupies 189–247 (FGCSCTDCFFQKCCPAEAGVLLAYNKNQQIKIPPGTPIYECNSRCQCGPDCPNRIVQKG). Residues C191, C193, C196, C201, C202, C229, C233, C235, and C239 each coordinate Zn(2+). Residues 250-373 (YSLCIFRTSN…AGEELTFDYQ (124 aa)) form the SET domain. Residues 261-263 (RGW) and 330-331 (NH) contribute to the S-adenosyl-L-methionine site. C333 serves as a coordination point for Zn(2+). Residue Y372 participates in S-adenosyl-L-methionine binding. Phosphoserine occurs at positions 381, 384, and 388. One can recognise a Post-SET domain in the interval 394 to 410 (VRTVCKCGAVTCRGYLN). C398 is a Zn(2+) binding site. Position 399 (K399) interacts with S-adenosyl-L-methionine. 2 residues coordinate Zn(2+): C400 and C405.

It belongs to the class V-like SAM-binding methyltransferase superfamily. Histone-lysine methyltransferase family. Suvar3-9 subfamily. In terms of assembly, interacts with SMAD5. The large PER complex involved in the histone methylation is composed of at least PER2, CBX3, TRIM28, SUV39H1 and/or SUV39H2; CBX3 mediates the formation of the complex. Post-translationally, ubiquitinated by the DCX(DCAF13) E3 ubiquitin ligase complex, leading to its degradation.

The protein resides in the nucleus. It is found in the chromosome. Its subcellular location is the centromere. It catalyses the reaction L-lysyl(9)-[histone H3] + 3 S-adenosyl-L-methionine = N(6),N(6),N(6)-trimethyl-L-lysyl(9)-[histone H3] + 3 S-adenosyl-L-homocysteine + 3 H(+). Its function is as follows. Histone methyltransferase that specifically trimethylates 'Lys-9' of histone H3 using monomethylated H3 'Lys-9' as substrate. H3 'Lys-9' trimethylation represents a specific tag for epigenetic transcriptional repression by recruiting HP1 (CBX1, CBX3 and/or CBX5) proteins to methylated histones. Mainly functions in heterochromatin regions, thereby playing a central role in the establishment of constitutive heterochromatin at pericentric and telomere regions. H3 'Lys-9' trimethylation is also required to direct DNA methylation at pericentric repeats. SUV39H1 is targeted to histone H3 via its interaction with RB1 and is involved in many processes, such as cell cycle regulation, transcriptional repression and regulation of telomere length. May participate in regulation of higher-order chromatin organization during spermatogenesis. Recruited by the large PER complex to the E-box elements of the circadian target genes such as PER2 itself or PER1, contributes to the conversion of local chromatin to a heterochromatin-like repressive state through H3 'Lys-9' trimethylation. The chain is Histone-lysine N-methyltransferase SUV39H2 (SUV39H2) from Homo sapiens (Human).